The primary structure comprises 43 residues: Metallothionein A (43 aa).

Residues 1–16 (SCAGSCKCKNCRCRSC) form a beta region. The a divalent metal cation site is built by Cys2, Cys6, Cys8, Cys11, Cys13, Cys16, Cys20, Cys21, Cys23, Cys24, Cys28, Cys31, Cys35, and Cys37. Residues 17–43 (RKSCCSCCPAGCNNCAKGCVCKEPASS) form an alpha region.

This sequence belongs to the metallothionein superfamily. Type 1 family.

Metallothioneins have a high content of cysteine residues that bind various heavy metals. This is Metallothionein A from Colinus virginianus (Northern bobwhite).